The sequence spans 138 residues: Putative esterase HI_1161 (138 aa).

Belongs to the thioesterase PaaI family.

The chain is Putative esterase HI_1161 from Haemophilus influenzae (strain ATCC 51907 / DSM 11121 / KW20 / Rd).